A 206-amino-acid chain; its full sequence is Small ribosomal subunit protein uS4 (206 aa).

One can recognise an S4 RNA-binding domain in the interval 96–156 (SRLDNVVYRM…NKSKNQSRIK (61 aa)).

This sequence belongs to the universal ribosomal protein uS4 family. As to quaternary structure, part of the 30S ribosomal subunit. Contacts protein S5. The interaction surface between S4 and S5 is involved in control of translational fidelity.

In terms of biological role, one of the primary rRNA binding proteins, it binds directly to 16S rRNA where it nucleates assembly of the body of the 30S subunit. Its function is as follows. With S5 and S12 plays an important role in translational accuracy. This is Small ribosomal subunit protein uS4 from Buchnera aphidicola subsp. Acyrthosiphon pisum (strain 5A).